We begin with the raw amino-acid sequence, 506 residues long: 2-isopropylmalate synthase (506 aa).

Residues 8–272 (LIVFDTTLRD…ETGIQLKEIL (265 aa)) form the Pyruvate carboxyltransferase domain. Mn(2+) is bound by residues Asp-17, His-206, His-208, and Asn-242. The interval 396 to 506 (ELEYVAVTVC…YLNAVNKALL (111 aa)) is regulatory domain.

This sequence belongs to the alpha-IPM synthase/homocitrate synthase family. LeuA type 1 subfamily. Homodimer. Mn(2+) is required as a cofactor.

It is found in the cytoplasm. It catalyses the reaction 3-methyl-2-oxobutanoate + acetyl-CoA + H2O = (2S)-2-isopropylmalate + CoA + H(+). It functions in the pathway amino-acid biosynthesis; L-leucine biosynthesis; L-leucine from 3-methyl-2-oxobutanoate: step 1/4. Its function is as follows. Catalyzes the condensation of the acetyl group of acetyl-CoA with 3-methyl-2-oxobutanoate (2-ketoisovalerate) to form 3-carboxy-3-hydroxy-4-methylpentanoate (2-isopropylmalate). This Methylacidiphilum infernorum (isolate V4) (Methylokorus infernorum (strain V4)) protein is 2-isopropylmalate synthase.